A 351-amino-acid chain; its full sequence is Phosphoribosylformylglycinamidine cyclo-ligase (351 aa).

This sequence belongs to the AIR synthase family.

It localises to the cytoplasm. The catalysed reaction is 2-formamido-N(1)-(5-O-phospho-beta-D-ribosyl)acetamidine + ATP = 5-amino-1-(5-phospho-beta-D-ribosyl)imidazole + ADP + phosphate + H(+). It participates in purine metabolism; IMP biosynthesis via de novo pathway; 5-amino-1-(5-phospho-D-ribosyl)imidazole from N(2)-formyl-N(1)-(5-phospho-D-ribosyl)glycinamide: step 2/2. This Burkholderia vietnamiensis (strain G4 / LMG 22486) (Burkholderia cepacia (strain R1808)) protein is Phosphoribosylformylglycinamidine cyclo-ligase.